Consider the following 344-residue polypeptide: Dihydroorotase (344 aa).

H14 and H16 together coordinate Zn(2+). Substrate-binding positions include 16–18 (HLR) and N42. K100, H137, and H175 together coordinate Zn(2+). At K100 the chain carries N6-carboxylysine. H137 lines the substrate pocket. Residue L220 coordinates substrate. D248 is a binding site for Zn(2+). D248 is a catalytic residue. Residues H252 and A264 each contribute to the substrate site.

The protein belongs to the metallo-dependent hydrolases superfamily. DHOase family. Class II DHOase subfamily. Homodimer. Zn(2+) is required as a cofactor.

It catalyses the reaction (S)-dihydroorotate + H2O = N-carbamoyl-L-aspartate + H(+). The protein operates within pyrimidine metabolism; UMP biosynthesis via de novo pathway; (S)-dihydroorotate from bicarbonate: step 3/3. In terms of biological role, catalyzes the reversible cyclization of carbamoyl aspartate to dihydroorotate. This chain is Dihydroorotase, found in Cupriavidus pinatubonensis (strain JMP 134 / LMG 1197) (Cupriavidus necator (strain JMP 134)).